A 505-amino-acid chain; its full sequence is Deoxyguanosinetriphosphate triphosphohydrolase (505 aa).

Residues 66-273 form the HD domain; sequence RLTHSLEVQQ…MEAADDISYC (208 aa).

It belongs to the dGTPase family. Type 1 subfamily. Homotetramer. It depends on Mg(2+) as a cofactor.

The enzyme catalyses dGTP + H2O = 2'-deoxyguanosine + triphosphate + H(+). DGTPase preferentially hydrolyzes dGTP over the other canonical NTPs. The protein is Deoxyguanosinetriphosphate triphosphohydrolase of Yersinia enterocolitica serotype O:8 / biotype 1B (strain NCTC 13174 / 8081).